We begin with the raw amino-acid sequence, 403 residues long: Ribosomal RNA large subunit methyltransferase I (403 aa).

In terms of domain architecture, PUA spans 9–88 (YPRLVLSKGR…ESIDIAFFTR (80 aa)).

Belongs to the methyltransferase superfamily. RlmI family.

The protein localises to the cytoplasm. The catalysed reaction is cytidine(1962) in 23S rRNA + S-adenosyl-L-methionine = 5-methylcytidine(1962) in 23S rRNA + S-adenosyl-L-homocysteine + H(+). Its function is as follows. Specifically methylates the cytosine at position 1962 (m5C1962) of 23S rRNA. This Salmonella schwarzengrund (strain CVM19633) protein is Ribosomal RNA large subunit methyltransferase I.